The primary structure comprises 150 residues: Large ribosomal subunit protein bL9 (150 aa).

It belongs to the bacterial ribosomal protein bL9 family.

In terms of biological role, binds to the 23S rRNA. This is Large ribosomal subunit protein bL9 from Photobacterium profundum (strain SS9).